Reading from the N-terminus, the 429-residue chain is Phosphoribosylamine--glycine ligase (429 aa).

Residues 109 to 316 (KDFLARHKIP…LVELCLKACD (208 aa)) enclose the ATP-grasp domain. Residue 135 to 196 (LREKGTPIVV…EEFLDGEEAS (62 aa)) participates in ATP binding. Glu-286 and Asn-288 together coordinate Mg(2+).

Belongs to the GARS family. Mg(2+) serves as cofactor. Requires Mn(2+) as cofactor.

The enzyme catalyses 5-phospho-beta-D-ribosylamine + glycine + ATP = N(1)-(5-phospho-beta-D-ribosyl)glycinamide + ADP + phosphate + H(+). Its pathway is purine metabolism; IMP biosynthesis via de novo pathway; N(1)-(5-phospho-D-ribosyl)glycinamide from 5-phospho-alpha-D-ribose 1-diphosphate: step 2/2. The chain is Phosphoribosylamine--glycine ligase from Haemophilus influenzae (strain ATCC 51907 / DSM 11121 / KW20 / Rd).